The chain runs to 205 residues: Small ribosomal subunit protein uS7 (205 aa).

This sequence belongs to the universal ribosomal protein uS7 family. In terms of assembly, part of the 30S ribosomal subunit.

Its function is as follows. One of the primary rRNA binding proteins, it binds directly to 16S rRNA where it nucleates assembly of the head domain of the 30S subunit. Is located at the subunit interface close to the decoding center. The protein is Small ribosomal subunit protein uS7 of Aeropyrum pernix (strain ATCC 700893 / DSM 11879 / JCM 9820 / NBRC 100138 / K1).